The following is a 520-amino-acid chain: MNTTVSNQTPHIRIFDTTLRDGEQSPGCSMTPQQKLVMARALDALGVDIIETGFPASSYSDREAVAMMGRELRRPTLAVLSRCLQADIEISARALEAAANPRLHVFLSTSPLHREHKLRMSREQVLESVHKHVTLARGYIDDIEFSAEDATRTEEDFLAEVTRVAIAAGATTINLPDTVGFTTPEEIRGMFSRLIASVEGAEKVIFSTHCHNDLGLAAANSLAAIEGGARQVECTINGIGERAGNCALEEITMALKVRGAFYNLDTAINTPRIVSTSQLLQRLVGMPVQRNKAVVGGNAFAHESGIHQHGMLRHRGTYEIMRPEDVGWESSQMVLGRHSGRAAVEQRLRALGYLLEEDEAKLVFEQFKALCEKQRVVTDADLQALMQDATVQEGYRLASMTISDVGSRANALVELSDPDGNRVAETAQGNGPVDALFGALASATGVKLELDSYQVHSVGIGADARGEASLSVRHDGVEYEGTGTSKDIIEASALAWLDVANRLLRQRERGVVAGKTAAVA.

In terms of domain architecture, Pyruvate carboxyltransferase spans Ile-12–Val-274. Mn(2+) is bound by residues Asp-21, His-209, His-211, and Asn-245. Residues Arg-396–Ala-520 form a regulatory domain region.

This sequence belongs to the alpha-IPM synthase/homocitrate synthase family. LeuA type 1 subfamily. Homodimer. Mn(2+) serves as cofactor.

It localises to the cytoplasm. It catalyses the reaction 3-methyl-2-oxobutanoate + acetyl-CoA + H2O = (2S)-2-isopropylmalate + CoA + H(+). It functions in the pathway amino-acid biosynthesis; L-leucine biosynthesis; L-leucine from 3-methyl-2-oxobutanoate: step 1/4. Functionally, catalyzes the condensation of the acetyl group of acetyl-CoA with 3-methyl-2-oxobutanoate (2-ketoisovalerate) to form 3-carboxy-3-hydroxy-4-methylpentanoate (2-isopropylmalate). The chain is 2-isopropylmalate synthase from Xanthomonas campestris pv. campestris (strain B100).